A 331-amino-acid chain; its full sequence is Isopenicillin N synthase (331 aa).

Residues Arg-87, Tyr-91, Ser-183, and Tyr-189 each coordinate isopenicillin N. The N-[(5S)-5-amino-5-carboxypentanoyl]-L-cysteinyl-D-valine site is built by Arg-87, Tyr-91, Ser-183, Tyr-189, His-214, and Asp-216. The 113-residue stretch at 176–288 folds into the Fe2OG dioxygenase domain; it reads KKEDALSSVV…RQSLPFFVNL (113 aa). The Fe(2+) site is built by His-214, Asp-216, and His-270. Arg-279 is a 2-oxoglutarate binding site. Ser-281 serves as a coordination point for isopenicillin N. An N-[(5S)-5-amino-5-carboxypentanoyl]-L-cysteinyl-D-valine-binding site is contributed by Ser-281.

Belongs to the iron/ascorbate-dependent oxidoreductase family. As to quaternary structure, monomer. The cofactor is Fe(2+).

It localises to the cytoplasm. It is found in the cytosol. The catalysed reaction is N-[(5S)-5-amino-5-carboxypentanoyl]-L-cysteinyl-D-valine + O2 = isopenicillin N + 2 H2O. It participates in antibiotic biosynthesis; penicillin G biosynthesis; penicillin G from L-alpha-aminoadipate and L-cysteine and L-valine: step 2/3. Its function is as follows. Isopenicillin N synthase; part of the gene cluster that mediates the biosynthesis of penicillin, the world's most important antibiotic. IpnA catalyzes the cyclization of the tripeptide N-[(5S)-5-amino-5-carboxypentanoyl]-L-cysteinyl-D-valine (LLD-ACV or ACV) to form isopenicillin N (IPN) that contains the beta-lactam nucleus. The penicillin biosynthesis occurs via 3 enzymatic steps, the first corresponding to the production of the tripeptide N-[(5S)-5-amino-5-carboxypentanoyl]-L-cysteinyl-D-valine (LLD-ACV or ACV) by the NRPS acvA. The tripeptide ACV is then cyclized to isopenicillin N (IPN) by the isopenicillin N synthase ipnA that forms the beta-lactam nucleus. Finally, the alpha-aminoadipyl side chain is exchanged for phenylacetic acid by the isopenicillin N acyltransferase aatA to yield penicillin in the peroxisomal matrix. The polypeptide is Isopenicillin N synthase (Penicillium chrysogenum (Penicillium notatum)).